Consider the following 147-residue polypeptide: Large ribosomal subunit protein uL15 (147 aa).

The tract at residues 1–59 (MKLYELKPAPGSKKNRKRVGRGESSGHGKTSTRGHKGQWARSGGGVRPGFEGGQMPLTR) is disordered. Residues 42 to 52 (SGGGVRPGFEG) are compositionally biased toward gly residues.

It belongs to the universal ribosomal protein uL15 family. As to quaternary structure, part of the 50S ribosomal subunit.

In terms of biological role, binds to the 23S rRNA. In Caldicellulosiruptor bescii (strain ATCC BAA-1888 / DSM 6725 / KCTC 15123 / Z-1320) (Anaerocellum thermophilum), this protein is Large ribosomal subunit protein uL15.